Consider the following 575-residue polypeptide: Kelch repeat and BTB domain-containing protein 8 (575 aa).

The 69-residue stretch at 23-91 (TDIVVEVDHG…AYTSRVILTE (69 aa)) folds into the BTB domain. The BACK domain maps to 126–228 (SIGVFIFADH…MEDAFIEKIP (103 aa)). Kelch repeat units lie at residues 310-364 (DIYI…YCCG), 365-415 (KMYA…EHKE), 417-455 (IYVL…VYKD), 457-506 (IYYI…LFQN), and 516-562 (QVTV…FECA).

It belongs to the KBTBD8 family. Component of the BCR(KBTBD8) E3 ubiquitin ligase complex, at least composed of CUL3, KBTBD8 and RBX1.

The protein resides in the cytoplasm. It is found in the cytoskeleton. Its subcellular location is the spindle. It localises to the golgi apparatus. Its function is as follows. Substrate-specific adapter of a BCR (BTB-CUL3-RBX1) E3 ubiquitin ligase complex that acts as a regulator of neural crest specification. The BCR(KBTBD8) complex acts by mediating monoubiquitination of NOLC1 and TCOF1: monoubiquitination promotes the formation of a NOLC1-TCOF1 complex that acts as a platform to connect RNA polymerase I with enzymes responsible for ribosomal processing and modification, leading to remodel the translational program of differentiating cells in favor of neural crest specification. In Rattus norvegicus (Rat), this protein is Kelch repeat and BTB domain-containing protein 8.